The sequence spans 342 residues: uncharacterized protein (342 aa).

The first 18 residues, 1–18, serve as a signal peptide directing secretion; it reads MWKKLMLLLLMAIPLVSA.

This is an uncharacterized protein from Methanocaldococcus jannaschii (strain ATCC 43067 / DSM 2661 / JAL-1 / JCM 10045 / NBRC 100440) (Methanococcus jannaschii).